A 264-amino-acid chain; its full sequence is Anamorsin homolog 2 (264 aa).

Residues 1–142 (MAATAAALAV…KVSWSMGSSF (142 aa)) are N-terminal SAM-like domain. The linker stretch occupies residues 143–174 (PLKKATKGLPKIQIDDDSELIDEDSLLTEDDL). Residues C185, C194, C197, and C199 each coordinate [2Fe-2S] cluster. The tract at residues 185–199 (CEVGATRKACKNCTC) is fe-S binding site A. Positions 225, 228, 236, and 239 each coordinate [4Fe-4S] cluster. 2 consecutive short sequence motifs (cx2C motif) follow at residues 225–228 (CGNC) and 236–239 (CGTC). Positions 225-239 (CGNCGLGDAFRCGTC) are fe-S binding site B.

Belongs to the anamorsin family. Monomer. It depends on [2Fe-2S] cluster as a cofactor. [4Fe-4S] cluster is required as a cofactor.

It localises to the cytoplasm. The protein resides in the mitochondrion intermembrane space. Functionally, component of the cytosolic iron-sulfur (Fe-S) protein assembly (CIA) machinery. Required for the maturation of extramitochondrial Fe-S proteins. Part of an electron transfer chain functioning in an early step of cytosolic Fe-S biogenesis, facilitating the de novo assembly of a [4Fe-4S] cluster on the cytosolic Fe-S scaffold complex. Electrons are transferred from NADPH via a FAD- and FMN-containing diflavin oxidoreductase. Together with the diflavin oxidoreductase, also required for the assembly of the diferric tyrosyl radical cofactor of ribonucleotide reductase (RNR), probably by providing electrons for reduction during radical cofactor maturation in the catalytic small subunit. The protein is Anamorsin homolog 2 of Oryza sativa subsp. japonica (Rice).